Consider the following 473-residue polypeptide: Notchless protein homolog (473 aa).

The ubiquitin-like (UBL) domain stretch occupies residues 9–91; that stretch reads GKTVMCLLTD…VLTIVYQQQA (83 aa). 8 WD repeats span residues 107–146, 149–188, 192–236, 239–277, 313–354, 358–399, 400–439, and 442–473; these read GHAE…PLFT, GHKN…LEGS, GHKK…SIIC, GHTL…LIRE, EKQK…QPKK, GHQQ…TVFR, GHVG…LKQD, and GHAD…LWKG. A DWD box motif is present at residues 417–432; sequence LLSGSKDSTLKIWEIR.

It belongs to the NLE1/RSA4 family. As to quaternary structure, associates with the pre-60S ribosomal particle. In terms of tissue distribution, constitutively and ubiquitously expressed.

The protein resides in the nucleus. The protein localises to the nucleolus. Functionally, required for female gametophyte development. In Arabidopsis thaliana (Mouse-ear cress), this protein is Notchless protein homolog.